Reading from the N-terminus, the 22-residue chain is NADH dehydrogenase [ubiquinone] 1 alpha subcomplex subunit 9 (22 aa).

The interval 1–22 is disordered; that stretch reads ASNLATGGAGPLIXKGTGGRSS.

The protein belongs to the complex I NDUFA9 subunit family. As to quaternary structure, complex I is composed of about 45 different subunits. It depends on FAD as a cofactor.

It is found in the mitochondrion matrix. Accessory subunit of the mitochondrial membrane respiratory chain NADH dehydrogenase (Complex I), that is believed not to be involved in catalysis. Complex I functions in the transfer of electrons from NADH to the respiratory chain. The immediate electron acceptor for the enzyme is believed to be ubiquinone. The sequence is that of NADH dehydrogenase [ubiquinone] 1 alpha subcomplex subunit 9 from Solanum tuberosum (Potato).